We begin with the raw amino-acid sequence, 491 residues long: Delayed-rectifier potassium channel regulatory subunit KCNS3 (491 aa).

Topologically, residues 1-182 are cytoplasmic; sequence MVFGEFFHRP…IRMENPAYCL (182 aa). The chain crosses the membrane as a helical span at residues 183–204; that stretch reads SAKLIAISSLSVVLASIVAMCV. The Extracellular portion of the chain corresponds to 205-220; that stretch reads HSMSEFQNEDGEVDDP. A helical transmembrane segment spans residues 221–243; the sequence is VLEGVEIACIAWFTGELAIRLVA. The Cytoplasmic portion of the chain corresponds to 244-254; it reads APSQKKFWKNP. The chain crosses the membrane as a helical span at residues 255–275; the sequence is LNIIDFVSIIPFYATLAVDTK. The Extracellular portion of the chain corresponds to 276-285; it reads EEESEDIENM. The helical; Voltage-sensor transmembrane segment at 286 to 306 threads the bilayer; that stretch reads GKVVQILRLMRIFRILKLARH. Residues 307–321 lie on the Cytoplasmic side of the membrane; that stretch reads SVGLRSLGATLRHSY. Residues 322-343 traverse the membrane as a helical segment; the sequence is HEVGLLLLFLSVGISIFSVLIY. At 344-357 the chain is on the extracellular side; sequence SVEKDELASSLTSI. The helical intramembrane region spans 358-369; that stretch reads PICWWWATISMT. Residues 370–375 carry the Selectivity filter motif; it reads TVGYGD. The stretch at 370 to 377 is an intramembrane region; that stretch reads TVGYGDTH. At 378 to 384 the chain is on the extracellular side; it reads PVTLAGK. Residues 385-413 form a helical membrane-spanning segment; it reads IIASTCIICGILVVALPITIIFNKFSKYY. The Cytoplasmic segment spans residues 414–491; the sequence is QKQKDMDVDQ…TASLENCTAK (78 aa).

It belongs to the potassium channel family. S (TC 1.A.1.2) subfamily. Kv9.3/KCNS3 sub-subfamily. In terms of assembly, heterotetramer with KCNB1. Does not form homomultimers. Expressed in myocytes. Detected in lung, spleen, brain and heart.

The protein resides in the cell membrane. Potassium channel regulatory subunit that modulates the delayed rectifier potassium channel activity of KCNB1 by namely slowing down the deactivation and inactivation time constants. While it does not form functional channel on its own, it can form functional heterotetrameric channels with KCNB1. This is Delayed-rectifier potassium channel regulatory subunit KCNS3 from Rattus norvegicus (Rat).